The primary structure comprises 616 residues: Dihydroxy-acid dehydratase (616 aa).

Mg(2+) is bound at residue Asp-81. Cys-122 contacts [2Fe-2S] cluster. Residues Asp-123 and Lys-124 each coordinate Mg(2+). N6-carboxylysine is present on Lys-124. Position 195 (Cys-195) interacts with [2Fe-2S] cluster. Glu-491 contacts Mg(2+). Ser-517 serves as the catalytic Proton acceptor.

The protein belongs to the IlvD/Edd family. Homodimer. [2Fe-2S] cluster is required as a cofactor. Requires Mg(2+) as cofactor.

The catalysed reaction is (2R)-2,3-dihydroxy-3-methylbutanoate = 3-methyl-2-oxobutanoate + H2O. It catalyses the reaction (2R,3R)-2,3-dihydroxy-3-methylpentanoate = (S)-3-methyl-2-oxopentanoate + H2O. It functions in the pathway amino-acid biosynthesis; L-isoleucine biosynthesis; L-isoleucine from 2-oxobutanoate: step 3/4. It participates in amino-acid biosynthesis; L-valine biosynthesis; L-valine from pyruvate: step 3/4. Functionally, functions in the biosynthesis of branched-chain amino acids. Catalyzes the dehydration of (2R,3R)-2,3-dihydroxy-3-methylpentanoate (2,3-dihydroxy-3-methylvalerate) into 2-oxo-3-methylpentanoate (2-oxo-3-methylvalerate) and of (2R)-2,3-dihydroxy-3-methylbutanoate (2,3-dihydroxyisovalerate) into 2-oxo-3-methylbutanoate (2-oxoisovalerate), the penultimate precursor to L-isoleucine and L-valine, respectively. The protein is Dihydroxy-acid dehydratase of Blochmanniella pennsylvanica (strain BPEN).